The sequence spans 338 residues: RNA 3'-terminal phosphate cyclase (338 aa).

Residues Q103 and 283-287 (YLADQ) each bind ATP. H308 (tele-AMP-histidine intermediate) is an active-site residue.

The protein belongs to the RNA 3'-terminal cyclase family. Type 1 subfamily.

Its subcellular location is the cytoplasm. It carries out the reaction a 3'-end 3'-phospho-ribonucleotide-RNA + ATP = a 3'-end 2',3'-cyclophospho-ribonucleotide-RNA + AMP + diphosphate. Catalyzes the conversion of 3'-phosphate to a 2',3'-cyclic phosphodiester at the end of RNA. The mechanism of action of the enzyme occurs in 3 steps: (A) adenylation of the enzyme by ATP; (B) transfer of adenylate to an RNA-N3'P to produce RNA-N3'PP5'A; (C) and attack of the adjacent 2'-hydroxyl on the 3'-phosphorus in the diester linkage to produce the cyclic end product. The biological role of this enzyme is unknown but it is likely to function in some aspects of cellular RNA processing. This Shigella boydii serotype 4 (strain Sb227) protein is RNA 3'-terminal phosphate cyclase.